A 507-amino-acid polypeptide reads, in one-letter code: Maturase K (507 aa).

The protein belongs to the intron maturase 2 family. MatK subfamily.

Its subcellular location is the plastid. It is found in the chloroplast. Its function is as follows. Usually encoded in the trnK tRNA gene intron. Probably assists in splicing its own and other chloroplast group II introns. This Magnolia figo (Banana shrub) protein is Maturase K.